Reading from the N-terminus, the 277-residue chain is NADPH-dependent 7-cyano-7-deazaguanine reductase (277 aa).

Residue 86–88 participates in substrate binding; the sequence is IES. 88–89 is a binding site for NADPH; sequence SK. The active-site Thioimide intermediate is Cys-184. Asp-191 functions as the Proton donor in the catalytic mechanism. 223–224 provides a ligand contact to substrate; the sequence is HE. NADPH is bound at residue 252 to 253; that stretch reads RG.

The protein belongs to the GTP cyclohydrolase I family. QueF type 2 subfamily. Homodimer.

The protein resides in the cytoplasm. It catalyses the reaction 7-aminomethyl-7-carbaguanine + 2 NADP(+) = 7-cyano-7-deazaguanine + 2 NADPH + 3 H(+). Its pathway is tRNA modification; tRNA-queuosine biosynthesis. Catalyzes the NADPH-dependent reduction of 7-cyano-7-deazaguanine (preQ0) to 7-aminomethyl-7-deazaguanine (preQ1). The protein is NADPH-dependent 7-cyano-7-deazaguanine reductase of Chromohalobacter salexigens (strain ATCC BAA-138 / DSM 3043 / CIP 106854 / NCIMB 13768 / 1H11).